The sequence spans 512 residues: GMP synthase [glutamine-hydrolyzing] (512 aa).

The Glutamine amidotransferase type-1 domain maps to 7–197 (TIIVLDFGSQ…VFGVCGCSEG (191 aa)). The active-site Nucleophile is the cysteine 84. Active-site residues include histidine 171 and glutamate 173. In terms of domain architecture, GMPS ATP-PPase spans 198 to 387 (WNMENFIEVE…LGIPDEIVWR (190 aa)). Position 225 to 231 (225 to 231 (SGGVDSS)) interacts with ATP.

As to quaternary structure, homodimer.

The catalysed reaction is XMP + L-glutamine + ATP + H2O = GMP + L-glutamate + AMP + diphosphate + 2 H(+). The protein operates within purine metabolism; GMP biosynthesis; GMP from XMP (L-Gln route): step 1/1. In terms of biological role, catalyzes the synthesis of GMP from XMP. The polypeptide is GMP synthase [glutamine-hydrolyzing] (Bacillus cytotoxicus (strain DSM 22905 / CIP 110041 / 391-98 / NVH 391-98)).